The chain runs to 147 residues: 3-hydroxyacyl-[acyl-carrier-protein] dehydratase FabZ (147 aa).

The active site involves His49.

The protein belongs to the thioester dehydratase family. FabZ subfamily.

It is found in the cytoplasm. The enzyme catalyses a (3R)-hydroxyacyl-[ACP] = a (2E)-enoyl-[ACP] + H2O. In terms of biological role, involved in unsaturated fatty acids biosynthesis. Catalyzes the dehydration of short chain beta-hydroxyacyl-ACPs and long chain saturated and unsaturated beta-hydroxyacyl-ACPs. This is 3-hydroxyacyl-[acyl-carrier-protein] dehydratase FabZ from Syntrophotalea carbinolica (strain DSM 2380 / NBRC 103641 / GraBd1) (Pelobacter carbinolicus).